The primary structure comprises 152 residues: Xanthine-guanine phosphoribosyltransferase (152 aa).

Residues 37–38 (RG), Arg-69, and 88–96 (DDLVDTGGT) each bind 5-phospho-alpha-D-ribose 1-diphosphate. A GMP-binding site is contributed by Arg-69. Mg(2+) is bound at residue Asp-89. Positions 92 and 135 each coordinate guanine. The xanthine site is built by Asp-92 and Ile-135. GMP contacts are provided by residues 92-96 (DTGGT) and 134-135 (WI).

Belongs to the purine/pyrimidine phosphoribosyltransferase family. XGPT subfamily. Homotetramer. The cofactor is Mg(2+).

Its subcellular location is the cell inner membrane. It catalyses the reaction GMP + diphosphate = guanine + 5-phospho-alpha-D-ribose 1-diphosphate. The enzyme catalyses XMP + diphosphate = xanthine + 5-phospho-alpha-D-ribose 1-diphosphate. The catalysed reaction is IMP + diphosphate = hypoxanthine + 5-phospho-alpha-D-ribose 1-diphosphate. It participates in purine metabolism; GMP biosynthesis via salvage pathway; GMP from guanine: step 1/1. The protein operates within purine metabolism; XMP biosynthesis via salvage pathway; XMP from xanthine: step 1/1. In terms of biological role, purine salvage pathway enzyme that catalyzes the transfer of the ribosyl-5-phosphate group from 5-phospho-alpha-D-ribose 1-diphosphate (PRPP) to the N9 position of the 6-oxopurines guanine and xanthine to form the corresponding ribonucleotides GMP (guanosine 5'-monophosphate) and XMP (xanthosine 5'-monophosphate), with the release of PPi. To a lesser extent, also acts on hypoxanthine. This chain is Xanthine-guanine phosphoribosyltransferase, found in Edwardsiella ictaluri (strain 93-146).